Reading from the N-terminus, the 46-residue chain is Iota-conotoxin-like Fi11.8 (46 aa).

Residues P2 and P11 each carry the 4-hydroxyproline modification. 4 disulfides stabilise this stretch: C5–C19, C12–C22, C18–C27, and C21–C38. At P29 the chain carries 4-hydroxyproline. 6'-bromotryptophan is present on W33. D-phenylalanine is present on F44.

It belongs to the conotoxin I1 superfamily. As to expression, expressed by the venom duct.

Its subcellular location is the secreted. Its function is as follows. Iota-conotoxins bind to voltage-gated sodium channels (Nav) and act as agonists by shifting the voltage-dependence of activation to more hyperpolarized levels. Produces general excitatory symptoms. This chain is Iota-conotoxin-like Fi11.8, found in Conus figulinus (Fig cone).